Reading from the N-terminus, the 443-residue chain is Glutamyl-tRNA reductase (443 aa).

Residues 49–52, Ser-109, 114–116, and Gln-120 contribute to the substrate site; these read TCNR and ETQ. Catalysis depends on Cys-50, which acts as the Nucleophile. NADP(+) is bound at residue 189 to 194; sequence GAGEMS.

The protein belongs to the glutamyl-tRNA reductase family. In terms of assembly, homodimer.

It carries out the reaction (S)-4-amino-5-oxopentanoate + tRNA(Glu) + NADP(+) = L-glutamyl-tRNA(Glu) + NADPH + H(+). It functions in the pathway porphyrin-containing compound metabolism; protoporphyrin-IX biosynthesis; 5-aminolevulinate from L-glutamyl-tRNA(Glu): step 1/2. Its function is as follows. Catalyzes the NADPH-dependent reduction of glutamyl-tRNA(Glu) to glutamate 1-semialdehyde (GSA). The polypeptide is Glutamyl-tRNA reductase (Desulfitobacterium hafniense (strain DSM 10664 / DCB-2)).